The chain runs to 376 residues: Putative cytosolic 5'-nucleotidase 3 (376 aa).

Catalysis depends on Asp-119, which acts as the Nucleophile. Asp-119 and Asp-121 together coordinate Mg(2+). The Proton donor role is filled by Asp-121. Substrate-binding positions include Glu-168, Ser-189, 236-237, and Lys-286; that span reads SA. Position 312 (Asp-312) interacts with Mg(2+).

It belongs to the pyrimidine 5'-nucleotidase family.

The protein localises to the cytoplasm. The enzyme catalyses a ribonucleoside 5'-phosphate + H2O = a ribonucleoside + phosphate. In Caenorhabditis elegans, this protein is Putative cytosolic 5'-nucleotidase 3.